A 61-amino-acid chain; its full sequence is Small ribosomal subunit protein uS14B (61 aa).

Residues cysteine 24, cysteine 27, cysteine 40, and cysteine 43 each coordinate Zn(2+).

Belongs to the universal ribosomal protein uS14 family. Zinc-binding uS14 subfamily. As to quaternary structure, part of the 30S ribosomal subunit. Contacts proteins S3 and S10. The cofactor is Zn(2+).

Its function is as follows. Binds 16S rRNA, required for the assembly of 30S particles and may also be responsible for determining the conformation of the 16S rRNA at the A site. The polypeptide is Small ribosomal subunit protein uS14B (Ligilactobacillus salivarius (strain UCC118) (Lactobacillus salivarius)).